Consider the following 1729-residue polypeptide: 182 kDa tankyrase-1-binding protein (1729 aa).

Residues M1–M12 are compositionally biased toward polar residues. Residues M1–P151 form a disordered region. Residue S14 is modified to Phosphoserine. The span at A46–V63 shows a compositional bias: low complexity. Basic and acidic residues predominate over residues T117 to P127. T131 bears the Phosphothreonine mark. Residues S178, S221, and S228 each carry the phosphoserine modification. Disordered stretches follow at residues G184 to L450, P484 to L603, and E657 to D880. The segment at D210–R1572 is acidic. Basic and acidic residues predominate over residues A230 to L245. T239 is subject to Phosphothreonine. S287 and S301 each carry phosphoserine. Residues P352–E363 show a composition bias toward low complexity. A compositionally biased stretch (pro residues) spans A364 to V374. A phosphoserine mark is found at S429, S435, S437, S494, and S498. Composition is skewed to low complexity over residues I500–A512, V524–S541, and L572–L583. T501 bears the Phosphothreonine mark. Residues S601, S672, S691, S695, S712, S724, S744, S762, and S806 each carry the phosphoserine modification. A compositionally biased stretch (polar residues) spans P738–S753. Positions A803–V812 are enriched in polar residues. At T833 the chain carries Phosphothreonine. A phosphoserine mark is found at S836, S851, S872, S877, S882, and S893. Residues R858–S872 show a composition bias toward basic and acidic residues. Y897 carries the phosphotyrosine modification. A disordered region spans residues Y897–K1083. 4 positions are modified to phosphoserine: S899, S920, S936, and S976. Residue T979 is modified to Phosphothreonine. S983, S987, S1004, S1008, S1013, S1024, S1029, S1054, S1073, S1091, S1103, S1133, S1138, S1158, S1178, S1248, and S1253 each carry phosphoserine. The span at G1012 to E1021 shows a compositional bias: basic and acidic residues. Polar residues predominate over residues R1043–S1054. The segment at E1240–K1302 is disordered. A Phosphothreonine modification is found at T1282. A phosphoserine mark is found at S1297, S1328, S1331, S1383, and S1385. The interval A1362 to E1561 is disordered. Residues E1389 to G1400 are compositionally biased toward basic and acidic residues. Residues G1406 to L1419 are compositionally biased toward polar residues. A phosphoserine mark is found at S1435, S1439, S1450, S1452, S1473, S1476, S1503, and S1506. The tankyrase-binding stretch occupies residues S1450–R1542. Residue T1518 is modified to Phosphothreonine. 3 positions are modified to phosphoserine: S1533, S1545, and S1558. Position 1563 is a phosphothreonine (T1563). The segment at A1575 to V1729 is disordered. Over residues L1577–P1586 the composition is skewed to basic residues. A compositionally biased stretch (basic and acidic residues) spans S1602–A1615. Phosphoserine is present on residues S1620, S1621, and S1631. Positions P1629–R1635 match the Nuclear localization signal motif. N6-methyllysine is present on K1644. Phosphoserine is present on residues S1652, S1666, and S1715. A compositionally biased stretch (basic and acidic residues) spans R1665 to Q1679. Positions K1723–V1729 match the Nuclear localization signal motif.

As to quaternary structure, binds to the ANK repeat domain of TNKS1 and TNKS2. ADP-ribosylated by TNKS1 (in vitro). Detected in testis, ovary, lung, skeletal muscle, heart, prostate and pancreas, and at very low levels in brain and peripheral blood leukocytes.

The protein resides in the nucleus. The protein localises to the cytoplasm. It is found in the cytoskeleton. It localises to the chromosome. This Homo sapiens (Human) protein is 182 kDa tankyrase-1-binding protein (TNKS1BP1).